A 484-amino-acid chain; its full sequence is Arginine ADP-riboxanase OspC2 (484 aa).

Residues His-143, Gln-144, Ser-145, Leu-149, Ile-162, Asn-172, Phe-188, His-206, Phe-211, Asp-231, and Glu-326 each coordinate NAD(+). Glu-326 is an active-site residue. ANK repeat units lie at residues 414 to 444 (LYDV…DVNK) and 451 to 480 (SGDT…VSGK).

This sequence belongs to the OspC family.

It localises to the secreted. It catalyses the reaction L-arginyl-[protein] + NAD(+) = ADP-riboxanated L-argininyl-[protein] + nicotinamide + NH4(+) + H(+). Functionally, ADP-riboxanase effector that mediates arginine ADP-riboxanation of host caspases. ADP-riboxanation of host apoptotic caspases (CASP3 and CASP9) prevents their activation, thereby inhibiting host cell extrinsic and intrinsic apoptosis. Does not catalyze ADP-riboxanation of host CASP4/CASP11 or CASP8. In contrast to Ospc1 and OspC3, not able to inactivate host calmodulin. The chain is Arginine ADP-riboxanase OspC2 from Shigella flexneri.